Consider the following 213-residue polypeptide: Virion protein US10 homolog (213 aa).

It belongs to the herpesviridae US10 family. In terms of processing, phosphorylated.

The protein localises to the virion tegument. It localises to the host nucleus matrix. The chain is Virion protein US10 homolog (US639) from Gallid herpesvirus 2 (strain GA) (GaHV-2).